The following is a 238-amino-acid chain: Adenylate dimethylallyltransferase (238 aa).

The protein belongs to the isopentenyl transferase family.

It catalyses the reaction dimethylallyl diphosphate + AMP = N(6)-(dimethylallyl)adenosine 5'-phosphate + diphosphate. Transfers dimethylallyl groups to AMP as part of the biosynthesis of cytokinin phytohormones. The sequence is that of Adenylate dimethylallyltransferase (tzs) from Ralstonia solanacearum (Pseudomonas solanacearum).